Here is a 245-residue protein sequence, read N- to C-terminus: RAD51-like protein 1 (245 aa).

Interacts with brc-2 and rad-51.

Its subcellular location is the nucleus. Its function is as follows. Has a role in the homologous recombination repair (HRR) of genomic DNA during meiosis. Required for rad-51 recruitment onto ssDNA gaps generated at stalled replication fork barriers. The protein is RAD51-like protein 1 (rfs-1) of Caenorhabditis elegans.